Here is a 375-residue protein sequence, read N- to C-terminus: Fructose-1,6-bisphosphate aldolase/phosphatase (375 aa).

The active-site Proton acceptor; for FBP phosphatase activity is D15. Mg(2+) contacts are provided by D15, H22, D56, and D57. H22 is a beta-D-fructose 1,6-bisphosphate binding site. Residue H22 participates in dihydroxyacetone phosphate binding. Y94 serves as a coordination point for beta-D-fructose 1,6-bisphosphate. Q98 is a binding site for Mg(2+). Residue 107-108 (GN) participates in beta-D-fructose 1,6-bisphosphate binding. D135 contacts Mg(2+). K136 is a beta-D-fructose 1,6-bisphosphate binding site. K136 contacts dihydroxyacetone phosphate. Y237 functions as the Proton donor/acceptor; for FBP aldolase activity in the catalytic mechanism. 3 residues coordinate Mg(2+): K240, D241, and D242. The active-site Schiff-base intermediate with DHAP; for FBP aldolase activity is K240. Beta-D-fructose 1,6-bisphosphate-binding positions include 250–251 (QS), R274, D295, and Y357. R274 and D295 together coordinate dihydroxyacetone phosphate.

It belongs to the FBP aldolase/phosphatase family. As to quaternary structure, homooctamer; dimer of tetramers. Mg(2+) serves as cofactor.

It catalyses the reaction beta-D-fructose 1,6-bisphosphate = D-glyceraldehyde 3-phosphate + dihydroxyacetone phosphate. The catalysed reaction is beta-D-fructose 1,6-bisphosphate + H2O = beta-D-fructose 6-phosphate + phosphate. The protein operates within carbohydrate biosynthesis; gluconeogenesis. Its activity is regulated as follows. FBPase activity is inhibited by Ca(2+), ATP, ADP and phosphoenolpyruvate. Catalyzes two subsequent steps in gluconeogenesis: the aldol condensation of dihydroxyacetone phosphate (DHAP) and glyceraldehyde-3-phosphate (GA3P) to fructose-1,6-bisphosphate (FBP), and the dephosphorylation of FBP to fructose-6-phosphate (F6P). Can also dephosphorylate, with lower activity, other related substrates including fructose-1-phosphate, fructose-6-phosphate, glucose-1-phosphate, glucose-6-phosphate, glycerol-2-phosphate, phosphoenolpyruvate, 5'-AMP, 6'-ADP and 7'-ATP. This is Fructose-1,6-bisphosphate aldolase/phosphatase from Thermococcus onnurineus (strain NA1).